An 81-amino-acid chain; its full sequence is uncharacterized protein (81 aa).

Residues 1–58 (MPQSKQQFKRQGARQRDSKGKFVKARTGMATAPPAAVSTAAPTASTMTPTGSSTTATI) form a disordered region. Positions 30 to 58 (ATAPPAAVSTAAPTASTMTPTGSSTTATI) are enriched in low complexity.

This is an uncharacterized protein from Caenorhabditis elegans.